We begin with the raw amino-acid sequence, 405 residues long: Cysteine desulfurase IscS (405 aa).

Asn-156 lines the pyridoxal 5'-phosphate pocket. At Lys-207 the chain carries N6-(pyridoxal phosphate)lysine. The Cysteine persulfide intermediate role is filled by Cys-329. Position 329 (Cys-329) interacts with [2Fe-2S] cluster.

Belongs to the class-V pyridoxal-phosphate-dependent aminotransferase family. NifS/IscS subfamily. As to quaternary structure, homodimer. Forms a heterotetramer with IscU, interacts with other sulfur acceptors. It depends on pyridoxal 5'-phosphate as a cofactor.

The protein resides in the cytoplasm. It carries out the reaction (sulfur carrier)-H + L-cysteine = (sulfur carrier)-SH + L-alanine. Its pathway is cofactor biosynthesis; iron-sulfur cluster biosynthesis. Its function is as follows. Master enzyme that delivers sulfur to a number of partners involved in Fe-S cluster assembly, tRNA modification or cofactor biosynthesis. Catalyzes the removal of elemental sulfur atoms from cysteine to produce alanine. Functions as a sulfur delivery protein for Fe-S cluster synthesis onto IscU, an Fe-S scaffold assembly protein, as well as other S acceptor proteins. The chain is Cysteine desulfurase IscS from Dechloromonas aromatica (strain RCB).